The primary structure comprises 508 residues: POTE ankyrin domain family member G (508 aa).

ANK repeat units lie at residues 172 to 201, 205 to 234, 238 to 267, 271 to 300, and 304 to 333; these read QKRT…QLNI, KKRT…DPNI, YGNT…DIES, HGLT…NLNA, and YGRT…DVSS. A compositionally biased stretch (polar residues) spans 367–376; the sequence is KVSSENSNPE. The segment at 367-488 is disordered; sequence KVSSENSNPE…QLSEEQNTGI (122 aa). Basic and acidic residues-rich tracts occupy residues 377-392 and 406-421; these read QDLK…RLKG and EINK…EMKK. The span at 476–488 shows a compositional bias: polar residues; the sequence is TQKQLSEEQNTGI.

Belongs to the POTE family.

This is POTE ankyrin domain family member G (POTEG) from Homo sapiens (Human).